The following is a 246-amino-acid chain: Phycocyanobilin:ferredoxin oxidoreductase (246 aa).

This sequence belongs to the HY2 family.

It carries out the reaction (2R,3Z)-phycocyanobilin + 4 oxidized [2Fe-2S]-[ferredoxin] = biliverdin IXalpha + 4 reduced [2Fe-2S]-[ferredoxin] + 4 H(+). In terms of biological role, catalyzes the four-electron reduction of biliverdin IX-alpha (2-electron reduction at both the A and D rings); the reaction proceeds via an isolatable 2-electron intermediate, 181,182-dihydrobiliverdin. The sequence is that of Phycocyanobilin:ferredoxin oxidoreductase from Synechococcus sp. (strain CC9902).